The primary structure comprises 297 residues: MSSLAAPQTGLLRQYLVLTKPRVTQLAVFCAVIGMFLAAPGMPDLSHVVFGTLGIWLLAAAAFAINCLIEQEVDARMLRTARRATARGTISDIQVLSLSGLLGGAGMLVLYHLVNPLTMWLTFATFVGYAIIYTVILKPRTPQNIVIGGLSGAMPPALGWAAVADSVPAEAWVLVLIIFIWTPPHFWALALYRNNDYIKAGLPMLPVTRGQQFTRLHILLYSFALLATTLLPYAIRMSGALYLASALALGGMFVWYAWRLYREYSDALARRLFRFSILYLALLFGALLIDHWVGLLR.

9 helical membrane-spanning segments follow: residues 23 to 43, 49 to 69, 93 to 113, 117 to 137, 144 to 164, 171 to 191, 215 to 235, 238 to 258, and 275 to 295; these read VTQLAVFCAVIGMFLAAPGMP, VFGTLGIWLLAAAAFAINCLI, IQVLSLSGLLGGAGMLVLYHL, LTMWLTFATFVGYAIIYTVIL, NIVIGGLSGAMPPALGWAAVA, AWVLVLIIFIWTPPHFWALAL, RLHILLYSFALLATTLLPYAI, SGALYLASALALGGMFVWYAW, and FSILYLALLFGALLIDHWVGL.

The protein belongs to the UbiA prenyltransferase family. Protoheme IX farnesyltransferase subfamily.

The protein resides in the cell inner membrane. The enzyme catalyses heme b + (2E,6E)-farnesyl diphosphate + H2O = Fe(II)-heme o + diphosphate. The protein operates within porphyrin-containing compound metabolism; heme O biosynthesis; heme O from protoheme: step 1/1. Its function is as follows. Converts heme B (protoheme IX) to heme O by substitution of the vinyl group on carbon 2 of heme B porphyrin ring with a hydroxyethyl farnesyl side group. The chain is Protoheme IX farnesyltransferase from Bordetella pertussis (strain Tohama I / ATCC BAA-589 / NCTC 13251).